Here is a 90-residue protein sequence, read N- to C-terminus: Small ribosomal subunit protein bS20 (90 aa).

A disordered region spans residues 1-25; that stretch reads MANSPSAKKRAKQAEKRRSHNASLR. The segment covering 7–20 has biased composition (basic residues); sequence AKKRAKQAEKRRSH.

It belongs to the bacterial ribosomal protein bS20 family.

Functionally, binds directly to 16S ribosomal RNA. The polypeptide is Small ribosomal subunit protein bS20 (Pseudomonas fluorescens (strain Pf0-1)).